Reading from the N-terminus, the 357-residue chain is 3'-hydroxy-N-methyl-(S)-coclaurine 4'-O-methyltransferase 2 (357 aa).

Residue Asp226 participates in S-adenosyl-L-methionine binding. Residue His264 is the Proton acceptor of the active site.

It belongs to the class I-like SAM-binding methyltransferase superfamily. Cation-independent O-methyltransferase family. COMT subfamily. Homodimer. As to expression, expressed in roots, stems, leaves and flowers.

It catalyses the reaction (S)-3'-hydroxy-N-methylcoclaurine + S-adenosyl-L-methionine = (S)-reticuline + S-adenosyl-L-homocysteine + H(+). It participates in alkaloid biosynthesis; (S)-reticuline biosynthesis; (S)-reticuline from (S)-norcoclaurine: step 4/4. Its function is as follows. Involved in the biosynthesis of benzylisoquinoline alkaloids. Catalyzes the transfer of the methyl group to the 4'-hydroxyl group of 3'-hydroxy-N-methylcoclaurine to form reticuline. Can also use laudanosoline and, with a lower activity, 6-O-methylnorlaudanosoline and norlaudanosoline as substrates. Also involved in the papaverine biosynthesis. This Papaver somniferum (Opium poppy) protein is 3'-hydroxy-N-methyl-(S)-coclaurine 4'-O-methyltransferase 2.